Here is a 312-residue protein sequence, read N- to C-terminus: Homoserine O-acetyltransferase (312 aa).

C142 (acyl-thioester intermediate) is an active-site residue. Substrate is bound by residues K163 and S194. Residue H237 is the Proton acceptor of the active site. E239 is a catalytic residue. R251 contributes to the substrate binding site.

This sequence belongs to the MetA family.

The protein resides in the cytoplasm. The catalysed reaction is L-homoserine + acetyl-CoA = O-acetyl-L-homoserine + CoA. Its pathway is amino-acid biosynthesis; L-methionine biosynthesis via de novo pathway; O-acetyl-L-homoserine from L-homoserine: step 1/1. Functionally, transfers an acetyl group from acetyl-CoA to L-homoserine, forming acetyl-L-homoserine. The polypeptide is Homoserine O-acetyltransferase (Catenibacterium mitsuokai (strain DSM 15897 / JCM 10609 / CCUG 48821 A / CIP 106738 / RCA14-39)).